The following is a 362-amino-acid chain: Biotin synthase (362 aa).

One can recognise a Radical SAM core domain in the interval 70-305 (CCGNVVDLCS…QQIIRYAGGR (236 aa)). [4Fe-4S] cluster is bound by residues C88, C92, and C95. The [2Fe-2S] cluster site is built by C133, C170, C230, and R300.

The protein belongs to the radical SAM superfamily. Biotin synthase family. As to quaternary structure, homodimer. Requires [4Fe-4S] cluster as cofactor. It depends on [2Fe-2S] cluster as a cofactor.

The catalysed reaction is (4R,5S)-dethiobiotin + (sulfur carrier)-SH + 2 reduced [2Fe-2S]-[ferredoxin] + 2 S-adenosyl-L-methionine = (sulfur carrier)-H + biotin + 2 5'-deoxyadenosine + 2 L-methionine + 2 oxidized [2Fe-2S]-[ferredoxin]. The protein operates within cofactor biosynthesis; biotin biosynthesis; biotin from 7,8-diaminononanoate: step 2/2. Functionally, catalyzes the conversion of dethiobiotin (DTB) to biotin by the insertion of a sulfur atom into dethiobiotin via a radical-based mechanism. This Synechocystis sp. (strain ATCC 27184 / PCC 6803 / Kazusa) protein is Biotin synthase.